A 406-amino-acid chain; its full sequence is uncharacterized protein (406 aa).

This is an uncharacterized protein from Acanthamoeba polyphaga mimivirus (APMV).